Consider the following 429-residue polypeptide: Argininosuccinate lyase (429 aa).

The protein belongs to the lyase 1 family. Argininosuccinate lyase subfamily.

It is found in the cytoplasm. The catalysed reaction is 2-(N(omega)-L-arginino)succinate = fumarate + L-arginine. It functions in the pathway amino-acid biosynthesis; L-arginine biosynthesis; L-arginine from L-ornithine and carbamoyl phosphate: step 3/3. The polypeptide is Argininosuccinate lyase (Pyrobaculum arsenaticum (strain DSM 13514 / JCM 11321 / PZ6)).